Consider the following 341-residue polypeptide: GTP 3',8-cyclase (341 aa).

The region spanning 11–231 (QKSRPLRDLR…RIINEDMPIE (221 aa)) is the Radical SAM core domain. A GTP-binding site is contributed by Arg-20. [4Fe-4S] cluster-binding residues include Cys-27 and Cys-31. Position 33 (Tyr-33) interacts with S-adenosyl-L-methionine. Residue Cys-34 coordinates [4Fe-4S] cluster. Arg-75 is a GTP binding site. Residue Gly-79 coordinates S-adenosyl-L-methionine. Thr-106 is a GTP binding site. Residue Ser-130 participates in S-adenosyl-L-methionine binding. Position 167 (Lys-167) interacts with GTP. Met-201 contacts S-adenosyl-L-methionine. Residues Cys-265 and Cys-268 each coordinate [4Fe-4S] cluster. 270 to 272 (RAR) provides a ligand contact to GTP. Cys-282 provides a ligand contact to [4Fe-4S] cluster.

Belongs to the radical SAM superfamily. MoaA family. Monomer and homodimer. [4Fe-4S] cluster is required as a cofactor.

The enzyme catalyses GTP + AH2 + S-adenosyl-L-methionine = (8S)-3',8-cyclo-7,8-dihydroguanosine 5'-triphosphate + 5'-deoxyadenosine + L-methionine + A + H(+). Its pathway is cofactor biosynthesis; molybdopterin biosynthesis. In terms of biological role, catalyzes the cyclization of GTP to (8S)-3',8-cyclo-7,8-dihydroguanosine 5'-triphosphate. The polypeptide is GTP 3',8-cyclase (Bacillus licheniformis (strain ATCC 14580 / DSM 13 / JCM 2505 / CCUG 7422 / NBRC 12200 / NCIMB 9375 / NCTC 10341 / NRRL NRS-1264 / Gibson 46)).